The primary structure comprises 466 residues: ATP synthase subunit beta, sodium ion specific (466 aa).

Residue 153-160 (GGAGVGKT) participates in ATP binding.

Belongs to the ATPase alpha/beta chains family. F-type ATPases have 2 components, CF(1) - the catalytic core - and CF(0) - the membrane proton channel. CF(1) has five subunits: alpha(3), beta(3), gamma(1), delta(1), epsilon(1). CF(0) has three main subunits: a, b and c.

The protein localises to the cell membrane. It catalyses the reaction 4 Na(+)(in) + ATP + H2O = 4 Na(+)(out) + ADP + phosphate + H(+). With respect to regulation, inhibited by nitrate. Produces ATP from ADP in the presence of a sodium ion gradient across the membrane. The beta chain is the catalytic subunit. This Acetobacterium woodii (strain ATCC 29683 / DSM 1030 / JCM 2381 / KCTC 1655 / WB1) protein is ATP synthase subunit beta, sodium ion specific.